The primary structure comprises 182 residues: FMN reductase (NADH) RutF (182 aa).

Belongs to the non-flavoprotein flavin reductase family. RutF subfamily.

The catalysed reaction is FMNH2 + NAD(+) = FMN + NADH + 2 H(+). Its function is as follows. Catalyzes the reduction of FMN to FMNH2 which is used to reduce pyrimidine by RutA via the Rut pathway. In Yersinia enterocolitica serotype O:8 / biotype 1B (strain NCTC 13174 / 8081), this protein is FMN reductase (NADH) RutF.